A 249-amino-acid polypeptide reads, in one-letter code: Type I iodothyronine deiodinase (249 aa).

Over 1-12 (MGLPQPGLWLKR) the chain is Extracellular. The chain crosses the membrane as a helical; Signal-anchor for type III membrane protein span at residues 13 to 33 (LWVLLEVAVHVVVGKVLLILF). The Cytoplasmic segment spans residues 34-249 (PDRVKRNILA…VRAVLEKLHS (216 aa)). The active site involves Sec-126. A non-standard amino acid (selenocysteine) is located at residue Sec-126.

This sequence belongs to the iodothyronine deiodinase family. In terms of assembly, predominantly monomer. Can form homodimers but homodimerization is not essential for enzyme activity.

The protein localises to the cell membrane. The protein resides in the endoplasmic reticulum membrane. Its subcellular location is the basolateral cell membrane. The enzyme catalyses 3,3',5-triiodo-L-thyronine + iodide + A + H(+) = L-thyroxine + AH2. The catalysed reaction is 3,3',5'-triiodo-L-thyronine + iodide + A + H(+) = L-thyroxine + AH2. It catalyses the reaction 3,3'-diiodo-L-thyronine + iodide + A + H(+) = 3,3',5'-triiodo-L-thyronine + AH2. It carries out the reaction 3,3'-diiodo-L-thyronine + iodide + A + H(+) = 3,3',5-triiodo-L-thyronine + AH2. The enzyme catalyses 3'-iodo-L-thyronine + iodide + A + H(+) = 3',5'-diiodo-L-thyronine + AH2. The catalysed reaction is 3-iodo-L-thyronine + iodide + A + H(+) = 3,5-diiodo-L-thyronine + AH2. It catalyses the reaction 3-iodo-L-thyronine + iodide + A + H(+) = 3,3'-diiodo-L-thyronine + AH2. It carries out the reaction 3,3'-diiodothyronamine + iodide + A + H(+) = 3,3',5'-triiodothyronamine + AH2. The enzyme catalyses 3'-iodothyronamine + iodide + A + H(+) = 3',5'-diiodothyronamine + AH2. The catalysed reaction is 3-iodothyronamine + iodide + A + H(+) = 3,3'-diiodothyronamine + AH2. It catalyses the reaction 3,3'-diiodothyronamine + iodide + A + H(+) = 3,3',5-triiodothyronamine + AH2. It carries out the reaction 3-iodothyronamine + iodide + A + H(+) = 3,5-diiodothyronamine + AH2. The enzyme catalyses 3,3'-diiodo-L-thyronine sulfate + iodide + A + H(+) = 3,3',5'-triiodo-L-thyronine sulfate + AH2. The catalysed reaction is 3,3',5'-triiodo-L-thyronine sulfate + iodide + A + H(+) = L-thyroxine sulfate + AH2. It catalyses the reaction 3,3'-diiodo-L-thyronine sulfate + iodide + A + H(+) = 3,3',5-triiodo-L-thyronine sulfate + AH2. With respect to regulation, deiodination of substrates 3,3',5'-triiodothyronine, 3,3',5'-triiodothyronamine and 3',5'- diiodothyronamine are inhibited by 6n-propyl-2-thiouracil (PTU). Functionally, plays a crucial role in the metabolism of thyroid hormones (TH) and has specific roles in TH activation and inactivation by deiodination. Catalyzes the deiodination of L-thyroxine (T4) to 3,5,3'-triiodothyronine (T3), 3,3',5'-triiodothyronine (rT3) to 3,3'-diiodothyronine (3,3'-T2) and 3',5'-diiodothyronine (3',5'-T2) to 3'-monoiodothyronine (3'-T1) via outer-ring deiodination (ORD). Catalyzes the deiodination of T4 to 3,3',5'-triiodothyronine (rT3) via inner-ring deiodination (IRD). Catalyzes the deiodination of T3 to 3,3'-T2, 3,5-diiodothyronine (3,5-T2) to 3- monoiodothyronine (3-T1) and 3,3'-T2 to 3-T1 via IRD. Catalyzes the phenolic ring deiodinations of 3,3',5'-triiodothyronamine and 3',5'-diiodothyronamine. Catalyzes the phenolic ring deiodination of 3,3'-diiodothyronamine and tyrosyl ring deiodinations of 3,5,3'-triiodothyronamine and 3,5-diiodothyronamine. Catalyzes the deiodination of L-thyroxine sulfate and 3,3',5-triiodo-L-thyronine sulfate via IRD and of 3,3',5'-triiodo-L-thyronine sulfate via ORD. This is Type I iodothyronine deiodinase (DIO1) from Homo sapiens (Human).